Reading from the N-terminus, the 336-residue chain is C4-dicarboxylate-binding periplasmic protein DctP (336 aa).

The first 31 residues, 1-31, serve as a signal peptide directing secretion; it reads MTRLNTCTFIKQIVKMTSIAALLGASLNSWA. 6 residues coordinate (S)-malate: lysine 48, lysine 101, arginine 176, asparagine 216, asparagine 220, and tyrosine 243. Residues lysine 48, lysine 101, arginine 176, asparagine 216, asparagine 220, and tyrosine 243 each contribute to the succinate site.

This sequence belongs to the bacterial solute-binding protein 7 family. The complex comprises the extracytoplasmic solute receptor protein DctP, and the two transmembrane proteins DctQ and DctM.

The protein resides in the periplasm. Functionally, part of the tripartite ATP-independent periplasmic (TRAP) transport system DctPQM involved in C4-dicarboxylates uptake. Required for the utilization of succinate, fumarate, L-malate and alpha-ketoglutarate. Binds succinate and malate. This is C4-dicarboxylate-binding periplasmic protein DctP from Shewanella loihica (strain ATCC BAA-1088 / PV-4).